Reading from the N-terminus, the 257-residue chain is 3-deoxy-manno-octulosonate cytidylyltransferase (257 aa).

Belongs to the KdsB family.

It localises to the cytoplasm. It catalyses the reaction 3-deoxy-alpha-D-manno-oct-2-ulosonate + CTP = CMP-3-deoxy-beta-D-manno-octulosonate + diphosphate. Its pathway is nucleotide-sugar biosynthesis; CMP-3-deoxy-D-manno-octulosonate biosynthesis; CMP-3-deoxy-D-manno-octulosonate from 3-deoxy-D-manno-octulosonate and CTP: step 1/1. It participates in bacterial outer membrane biogenesis; lipopolysaccharide biosynthesis. Activates KDO (a required 8-carbon sugar) for incorporation into bacterial lipopolysaccharide in Gram-negative bacteria. In Stenotrophomonas maltophilia (strain R551-3), this protein is 3-deoxy-manno-octulosonate cytidylyltransferase.